A 245-amino-acid chain; its full sequence is CTD nuclear envelope phosphatase 1B (245 aa).

The helical transmembrane segment at 7-29 threads the bilayer; sequence CLLGVRTFHGVTSRIWSFFLYIL. Positions 58 to 225 constitute an FCP1 homology domain; sequence NNVKRKILVL…LNLLPMLDAL (168 aa).

It belongs to the dullard family.

It is found in the endoplasmic reticulum membrane. Its subcellular location is the nucleus membrane. It carries out the reaction O-phospho-L-seryl-[protein] + H2O = L-seryl-[protein] + phosphate. The enzyme catalyses O-phospho-L-threonyl-[protein] + H2O = L-threonyl-[protein] + phosphate. Functionally, serine/threonine protein phosphatase that may dephosphorylate and activate lipins. Lipins are phosphatidate phosphatases that catalyze the conversion of phosphatidic acid to diacylglycerol and control the metabolism of fatty acids at different levels. May indirectly modulate the lipid composition of nuclear and/or endoplasmic reticulum membranes and be required for proper nuclear membrane morphology and/or dynamics. May also indirectly regulate the production of lipid droplets and triacylglycerol. May antagonize BMP signaling. The polypeptide is CTD nuclear envelope phosphatase 1B (ctdnep1b) (Danio rerio (Zebrafish)).